A 194-amino-acid chain; its full sequence is Glycerol-3-phosphate acyltransferase (194 aa).

5 consecutive transmembrane segments (helical) span residues 4–24, 80–100, 112–132, 137–157, and 161–181; these read ELIL…LLLA, WVAA…FLGF, VFLG…IGIV, YISL…AAVE, and LLVG…RENI.

Belongs to the PlsY family. As to quaternary structure, probably interacts with PlsX.

Its subcellular location is the cell inner membrane. The enzyme catalyses an acyl phosphate + sn-glycerol 3-phosphate = a 1-acyl-sn-glycero-3-phosphate + phosphate. It participates in lipid metabolism; phospholipid metabolism. Catalyzes the transfer of an acyl group from acyl-phosphate (acyl-PO(4)) to glycerol-3-phosphate (G3P) to form lysophosphatidic acid (LPA). This enzyme utilizes acyl-phosphate as fatty acyl donor, but not acyl-CoA or acyl-ACP. The sequence is that of Glycerol-3-phosphate acyltransferase from Geobacter sulfurreducens (strain ATCC 51573 / DSM 12127 / PCA).